The following is a 248-amino-acid chain: Chromatin target of PRMT1 protein (248 aa).

An N-acetylalanine modification is found at Ala2. The residue at position 33 (Thr33) is a Phosphothreonine. A phosphoserine mark is found at Ser40, Ser49, and Ser64. Residue Lys70 forms a Glycyl lysine isopeptide (Lys-Gly) (interchain with G-Cter in SUMO2) linkage. Residues 151–204 (LRRGGVRGRGGPGRGGLGRGAMGRGGIGGRGRGMIGRGRGGFGGRGRGRGRGRG) are disordered. Residues 153 to 206 (RGGVRGRGGPGRGGLGRGAMGRGGIGGRGRGMIGRGRGGFGGRGRGRGRGRGAL) are interaction with PRMT1. Residues 157 to 195 (RGRGGPGRGGLGRGAMGRGGIGGRGRGMIGRGRGGFGGR) are compositionally biased toward gly residues. Positions 194–203 (GRGRGRGRGR) match the GAR motif; involved in 5hmC binding motif. Position 242 is a phosphothreonine (Thr242).

Interacts with PRMT1 and PRMT5. Interacts with the 5FMC complex; the interaction is methylation-dependent. Interacts with FYTTD1, SET and PRC1 complex members CBX4, RNF2 and PHC2; the interactions are methylation-independent. Interacts with ZNF148. Component of the transcription/export (TREX) complex at least composed of ALYREF/THOC4, DDX39B, SARNP/CIP29, CHTOP and the THO subcomplex; TREX seems to have dynamic structure involving ATP-dependent remodeling; in the complex interacts (methylated) with ALYREF/THOC4 and with DDX39B in a methylation-independent manner. Interacts (methylated) with NXF1; the interaction is mutually exclusive with the NXF1:THOC5 interaction. Interacts with WDR77 and ERH. In terms of processing, asymmetrically methylated by PRMT1. Symmetrically methylated by PRMT5. As to expression, expressed in an erythroid progenitor cell line derived from peripheral blood. Expressed in glioblastoma cells.

It is found in the nucleus. The protein resides in the nucleolus. The protein localises to the nucleoplasm. Its subcellular location is the nucleus speckle. Plays an important role in the ligand-dependent activation of estrogen receptor target genes. May play a role in the silencing of fetal globin genes. Recruits the 5FMC complex to ZNF148, leading to desumoylation of ZNF148 and subsequent transactivation of ZNF148 target genes. Plays an important role in the tumorigenicity of glioblastoma cells. Binds to 5-hydroxymethylcytosine (5hmC) and associates with the methylosome complex containing PRMT1, PRMT5, MEP50 and ERH. The CHTOP-methylosome complex associated with 5hmC is recruited to selective sites on the chromosome, where it methylates H4R3 and activates the transcription of genes involved in glioblastomagenesis. Its function is as follows. Required for effective mRNA nuclear export and is a component of the TREX complex which is thought to couple mRNA transcription, processing and nuclear export, and specifically associates with spliced mRNA and not with unspliced pre-mRNA. TREX is recruited to spliced mRNAs by a transcription-independent mechanism, binds to mRNA upstream of the exon-junction complex (EJC) and is recruited in a splicing- and cap-dependent manner to a region near the 5' end of the mRNA where it functions in mRNA export to the cytoplasm via the TAP/NFX1 pathway. The TREX complex is essential for the export of Kaposi's sarcoma-associated herpesvirus (KSHV) intronless mRNAs and infectious virus production. Stimulates DDX39B ATPase and helicase activities. In cooperation with ALYREF/THOC4 enhances NXF1 RNA binding activity. This Homo sapiens (Human) protein is Chromatin target of PRMT1 protein (CHTOP).